We begin with the raw amino-acid sequence, 654 residues long: Translation factor GUF1, mitochondrial (654 aa).

One can recognise a tr-type G domain in the interval 57–237 (ENYRNFSIVA…SVIKNIPSPV (181 aa)). Residues 66 to 73 (AHVDHGKS), 130 to 134 (DTPGH), and 184 to 187 (NKID) contribute to the GTP site.

It belongs to the TRAFAC class translation factor GTPase superfamily. Classic translation factor GTPase family. LepA subfamily.

The protein localises to the mitochondrion inner membrane. The enzyme catalyses GTP + H2O = GDP + phosphate + H(+). Its function is as follows. Promotes mitochondrial protein synthesis. May act as a fidelity factor of the translation reaction, by catalyzing a one-codon backward translocation of tRNAs on improperly translocated ribosomes. Binds to mitochondrial ribosomes in a GTP-dependent manner. The chain is Translation factor GUF1, mitochondrial from Candida albicans (strain SC5314 / ATCC MYA-2876) (Yeast).